The primary structure comprises 346 residues: Elongation factor Ts (346 aa).

Residues 80–83 (TDFV) are involved in Mg(2+) ion dislocation from EF-Tu.

This sequence belongs to the EF-Ts family.

Its subcellular location is the cytoplasm. Functionally, associates with the EF-Tu.GDP complex and induces the exchange of GDP to GTP. It remains bound to the aminoacyl-tRNA.EF-Tu.GTP complex up to the GTP hydrolysis stage on the ribosome. This chain is Elongation factor Ts, found in Streptococcus pyogenes serotype M3 (strain ATCC BAA-595 / MGAS315).